The following is a 295-amino-acid chain: Mediator of RNA polymerase II transcription subunit 6 (295 aa).

The disordered stretch occupies residues 211-243; the sequence is TATAATNGNNAGGGSNKSSVRPTGGANMATVPS. Phosphoserine is present on Ser-225.

It belongs to the Mediator complex subunit 6 family. Component of the Mediator complex, which is composed of at least 21 subunits that form three structurally distinct submodules. The Mediator head module contains MED6, MED8, MED11, SRB4/MED17, SRB5/MED18, ROX3/MED19, SRB2/MED20 and SRB6/MED22, the middle module contains MED1, MED4, NUT1/MED5, MED7, CSE2/MED9, NUT2/MED10, SRB7/MED21 and SOH1/MED31, and the tail module contains MED2, PGD1/MED3, RGR1/MED14, GAL11/MED15 and SIN4/MED16. The head and the middle modules interact directly with RNA polymerase II, whereas the elongated tail module interacts with gene-specific regulatory proteins. MED6 interacts directly with SRB4/MED17 and SRB7/MED21.

Its subcellular location is the nucleus. Functionally, component of the Mediator complex, a coactivator involved in the regulated transcription of nearly all RNA polymerase II-dependent genes. Mediator functions as a bridge to convey information from gene-specific regulatory proteins to the basal RNA polymerase II transcription machinery. The Mediator complex, having a compact conformation in its free form, is recruited to promoters by direct interactions with regulatory proteins and serves for the assembly of a functional preinitiation complex with RNA polymerase II and the general transcription factors. The Mediator complex unfolds to an extended conformation and partially surrounds RNA polymerase II, specifically interacting with the unphosphorylated form of the C-terminal domain (CTD) of RNA polymerase II. The Mediator complex dissociates from the RNA polymerase II holoenzyme and stays at the promoter when transcriptional elongation begins. The sequence is that of Mediator of RNA polymerase II transcription subunit 6 (MED6) from Saccharomyces cerevisiae (strain ATCC 204508 / S288c) (Baker's yeast).